The primary structure comprises 150 residues: Macrodomain Ter protein (150 aa).

This sequence belongs to the MatP family. As to quaternary structure, homodimer.

It is found in the cytoplasm. Its function is as follows. Required for spatial organization of the terminus region of the chromosome (Ter macrodomain) during the cell cycle. Prevents early segregation of duplicated Ter macrodomains during cell division. Binds specifically to matS, which is a 13 bp signature motif repeated within the Ter macrodomain. The protein is Macrodomain Ter protein of Klebsiella pneumoniae (strain 342).